The sequence spans 180 residues: Bifunctional protein PyrR (180 aa).

Residues 39-40 (TR), 103-111 (DDVLYTGRT), and arginine 136 each bind substrate. A PRPP-binding motif is present at residues 99–111 (VILIDDVLYTGRT).

The protein belongs to the purine/pyrimidine phosphoribosyltransferase family. PyrR subfamily. As to quaternary structure, homodimer and homohexamer; in equilibrium.

It catalyses the reaction UMP + diphosphate = 5-phospho-alpha-D-ribose 1-diphosphate + uracil. In terms of biological role, regulates transcriptional attenuation of the pyrimidine nucleotide (pyr) operon by binding in a uridine-dependent manner to specific sites on pyr mRNA. This disrupts an antiterminator hairpin in the RNA and favors formation of a downstream transcription terminator, leading to a reduced expression of downstream genes. Also displays a weak uracil phosphoribosyltransferase activity which is not physiologically significant. The polypeptide is Bifunctional protein PyrR (Halalkalibacterium halodurans (strain ATCC BAA-125 / DSM 18197 / FERM 7344 / JCM 9153 / C-125) (Bacillus halodurans)).